Here is a 235-residue protein sequence, read N- to C-terminus: tRNA (cytidine-2'-O-)-methyltransferase TrmJ (235 aa).

S-adenosyl-L-methionine-binding positions include 77–79 (TSS), Gly-111, Ile-131, and 138–140 (PVL).

It belongs to the class IV-like SAM-binding methyltransferase superfamily. RNA methyltransferase TrmH family. As to quaternary structure, homodimer.

It is found in the cytoplasm. The catalysed reaction is cytidine(32) in tRNA + S-adenosyl-L-methionine = 2'-O-methylcytidine(32) in tRNA + S-adenosyl-L-homocysteine + H(+). In terms of biological role, catalyzes the formation of 2'O-methylated cytidine (Cm32) at position 32 in tRNA. Is specific for cytidine. The polypeptide is tRNA (cytidine-2'-O-)-methyltransferase TrmJ (Sulfolobus acidocaldarius (strain ATCC 33909 / DSM 639 / JCM 8929 / NBRC 15157 / NCIMB 11770)).